Consider the following 372-residue polypeptide: Cytochrome b (372 aa).

Transmembrane regions (helical) follow at residues 25–45 (FGSM…FLSM), 69–90 (WMMQ…YIHV), 105–125 (WLSG…GYVL), and 170–190 (FFAL…LHIM). Heme b is bound by residues His-75 and His-89. Positions 174 and 188 each coordinate heme b. Position 193 (His-193) interacts with a ubiquinone. The next 4 helical transmembrane spans lie at 218 to 238 (YKDL…ISFI), 280 to 300 (LGGA…PFTH), 312 to 332 (FMQL…WTAT), and 339 to 358 (YTMI…MSNP).

It belongs to the cytochrome b family. As to quaternary structure, the cytochrome bc1 complex contains 3 respiratory subunits (MT-CYB, CYC1 and UQCRFS1), 2 core proteins (UQCRC1 and UQCRC2) and probably 6 low-molecular weight proteins. Requires heme b as cofactor.

Its subcellular location is the mitochondrion inner membrane. Functionally, component of the ubiquinol-cytochrome c reductase complex (complex III or cytochrome b-c1 complex) that is part of the mitochondrial respiratory chain. The b-c1 complex mediates electron transfer from ubiquinol to cytochrome c. Contributes to the generation of a proton gradient across the mitochondrial membrane that is then used for ATP synthesis. The chain is Cytochrome b (MT-CYB) from Acrantophis dumerili (Dumeril's ground boa).